Here is a 419-residue protein sequence, read N- to C-terminus: Tyrosine--tRNA ligase (419 aa).

Residue Tyr34 participates in L-tyrosine binding. The 'HIGH' region motif lies at 39–48 (PSGDSMHIGH). L-tyrosine is bound by residues Tyr168 and Gln172. Residues 230-234 (KFGKS) carry the 'KMSKS' region motif. Lys233 provides a ligand contact to ATP. Positions 352-418 (ANLVDWLVTL…GKKKYFLVSY (67 aa)) constitute an S4 RNA-binding domain.

It belongs to the class-I aminoacyl-tRNA synthetase family. TyrS type 1 subfamily. In terms of assembly, homodimer.

It localises to the cytoplasm. It carries out the reaction tRNA(Tyr) + L-tyrosine + ATP = L-tyrosyl-tRNA(Tyr) + AMP + diphosphate + H(+). In terms of biological role, catalyzes the attachment of tyrosine to tRNA(Tyr) in a two-step reaction: tyrosine is first activated by ATP to form Tyr-AMP and then transferred to the acceptor end of tRNA(Tyr). The polypeptide is Tyrosine--tRNA ligase (Listeria monocytogenes serotype 4b (strain CLIP80459)).